Consider the following 219-residue polypeptide: Large ribosomal subunit protein uL1 (219 aa).

It belongs to the universal ribosomal protein uL1 family. As to quaternary structure, component of the large ribosomal subunit.

It is found in the cytoplasm. This chain is Large ribosomal subunit protein uL1 (RPL1), found in Encephalitozoon cuniculi (strain GB-M1) (Microsporidian parasite).